A 365-amino-acid chain; its full sequence is DNA replication and repair protein RecF (365 aa).

Residue 30–37 (GDNGEGKT) coordinates ATP.

It belongs to the RecF family.

Its subcellular location is the cytoplasm. The RecF protein is involved in DNA metabolism; it is required for DNA replication and normal SOS inducibility. RecF binds preferentially to single-stranded, linear DNA. It also seems to bind ATP. In Leptospira interrogans serogroup Icterohaemorrhagiae serovar copenhageni (strain Fiocruz L1-130), this protein is DNA replication and repair protein RecF.